Reading from the N-terminus, the 155-residue chain is Small ribosomal subunit protein uS7cz/uS7cy (155 aa).

The protein belongs to the universal ribosomal protein uS7 family. Part of the 30S ribosomal subunit.

It localises to the plastid. Its subcellular location is the chloroplast. In terms of biological role, one of the primary rRNA binding proteins, it binds directly to 16S rRNA where it nucleates assembly of the head domain of the 30S subunit. The chain is Small ribosomal subunit protein uS7cz/uS7cy (rps7-A) from Lotus japonicus (Lotus corniculatus var. japonicus).